The primary structure comprises 592 residues: V-type ATP synthase alpha chain 1 (592 aa).

233-240 (GPFGSGKT) provides a ligand contact to ATP.

Belongs to the ATPase alpha/beta chains family.

The catalysed reaction is ATP + H2O + 4 H(+)(in) = ADP + phosphate + 5 H(+)(out). In terms of biological role, produces ATP from ADP in the presence of a proton gradient across the membrane. The V-type alpha chain is a catalytic subunit. The protein is V-type ATP synthase alpha chain 1 of Clostridium tetani (strain Massachusetts / E88).